Consider the following 1035-residue polypeptide: DNA polymerase catalytic subunit (1035 aa).

It belongs to the DNA polymerase type-B family.

Its subcellular location is the host nucleus. The catalysed reaction is DNA(n) + a 2'-deoxyribonucleoside 5'-triphosphate = DNA(n+1) + diphosphate. This chain is DNA polymerase catalytic subunit (UL54), found in Macaca mulatta (Rhesus macaque).